The chain runs to 280 residues: MSASSQKTALTAEDIRAMKGRTPIVSLTAYTTPMAQLMDEHCDFVLVGDSVGMVLHGLPSTLGVTMEMMILHGAAVARGLKRAMMVIDMPFGSYEQSPAQAFANAARLMAETGAAAVKLEGGEEMADTIRFLVKRGIPVMAHIGLTPQSINTLGGYKVQGRDDAAKPLIADARAVAEAGAFAVVLEKVPASLADQVTEIVDIPTIGIGASAGCDGQVLVVDDMLGFFGAFKPKFVKRYAELGPAAEEAIADYASEVRARRFPSAEHTFADHAPQKAPQQD.

Asp-49 and Asp-88 together coordinate Mg(2+). 3-methyl-2-oxobutanoate-binding positions include 49–50 (DS), Asp-88, and Lys-118. Glu-120 is a binding site for Mg(2+). The active-site Proton acceptor is Glu-186.

Belongs to the PanB family. Homodecamer; pentamer of dimers. Requires Mg(2+) as cofactor.

It is found in the cytoplasm. It carries out the reaction 3-methyl-2-oxobutanoate + (6R)-5,10-methylene-5,6,7,8-tetrahydrofolate + H2O = 2-dehydropantoate + (6S)-5,6,7,8-tetrahydrofolate. It participates in cofactor biosynthesis; (R)-pantothenate biosynthesis; (R)-pantoate from 3-methyl-2-oxobutanoate: step 1/2. In terms of biological role, catalyzes the reversible reaction in which hydroxymethyl group from 5,10-methylenetetrahydrofolate is transferred onto alpha-ketoisovalerate to form ketopantoate. The sequence is that of 3-methyl-2-oxobutanoate hydroxymethyltransferase from Ruegeria sp. (strain TM1040) (Silicibacter sp.).